Reading from the N-terminus, the 416-residue chain is Isobutyryl-CoA dehydrogenase, mitochondrial (416 aa).

A mitochondrion-targeting transit peptide spans 1–21; it reads MISGLFKLSNKQSVLQNATKL. FAD contacts are provided by residues 156-165 and 189-191; these read YCLTEPGSGS and FIS. Position 165 (Ser-165) interacts with substrate. Residue 273 to 276 coordinates substrate; that stretch reads NGGR. Residues Arg-301, 311–312, and 370–374 each bind FAD; these read FQ and QLFGG. Glu-397 serves as the catalytic Proton acceptor. An FAD-binding site is contributed by 399–401; the sequence is SDA. Arg-409 is a binding site for substrate.

The protein belongs to the acyl-CoA dehydrogenase family. In terms of assembly, homotetramer. Requires FAD as cofactor.

The protein resides in the mitochondrion. It carries out the reaction 2-methylpropanoyl-CoA + oxidized [electron-transfer flavoprotein] + H(+) = 2-methylpropenoyl-CoA + reduced [electron-transfer flavoprotein]. The catalysed reaction is (2S)-2-methylbutanoyl-CoA + oxidized [electron-transfer flavoprotein] + H(+) = (2E)-2-methylbut-2-enoyl-CoA + reduced [electron-transfer flavoprotein]. The enzyme catalyses propanoyl-CoA + oxidized [electron-transfer flavoprotein] + H(+) = acryloyl-CoA + reduced [electron-transfer flavoprotein]. It functions in the pathway amino-acid degradation; L-valine degradation. Isobutyryl-CoA dehydrogenase which catalyzes one of the steps of the valine catabolic pathway. To a lesser extent, is also able to catalyze the oxidation of (2S)-2-methylbutanoyl-CoA. This is Isobutyryl-CoA dehydrogenase, mitochondrial (acad8) from Dictyostelium discoideum (Social amoeba).